The sequence spans 630 residues: 1-deoxy-D-xylulose-5-phosphate synthase (630 aa).

Thiamine diphosphate is bound by residues His72 and 113 to 115; that span reads GHS. Asp144 provides a ligand contact to Mg(2+). Thiamine diphosphate contacts are provided by residues 145–146, Asn173, Tyr284, and Glu367; that span reads GA. Residue Asn173 participates in Mg(2+) binding.

Belongs to the transketolase family. DXPS subfamily. In terms of assembly, homodimer. Mg(2+) is required as a cofactor. Requires thiamine diphosphate as cofactor.

It catalyses the reaction D-glyceraldehyde 3-phosphate + pyruvate + H(+) = 1-deoxy-D-xylulose 5-phosphate + CO2. Its pathway is metabolic intermediate biosynthesis; 1-deoxy-D-xylulose 5-phosphate biosynthesis; 1-deoxy-D-xylulose 5-phosphate from D-glyceraldehyde 3-phosphate and pyruvate: step 1/1. Its function is as follows. Catalyzes the acyloin condensation reaction between C atoms 2 and 3 of pyruvate and glyceraldehyde 3-phosphate to yield 1-deoxy-D-xylulose-5-phosphate (DXP). The sequence is that of 1-deoxy-D-xylulose-5-phosphate synthase from Bacillus cytotoxicus (strain DSM 22905 / CIP 110041 / 391-98 / NVH 391-98).